The primary structure comprises 252 residues: MESWLTSLITQSLTFSILIVGIVSFLESLALVGLLLPGIVFMATLGTFIGNGKLPFYPSWIAGIIGCLLGDWCSYFIGLYFKNWLYSLKFLKKNCHLLDKTKSLLHKHSMITILVGRFIGPTRPLIPMVSGMLKLPLKKFILPSLLGCILWPPIYFFPGIITGITINIPPNPKNDYFKWLLLIIAILIWFGIWLTSKWWKIKKIKNKNNIHFIKRNIGWIALIILSSGIIGLILIQFHPTMIIVRKVFSTIL.

The next 6 helical transmembrane spans lie at 5–25 (LTSLITQSLTFSILIVGIVSF), 29–49 (LALVGLLLPGIVFMATLGTFI), 61–81 (IAGIIGCLLGDWCSYFIGLYF), 141–161 (ILPSLLGCILWPPIYFFPGII), 179–199 (WLLLIIAILIWFGIWLTSKWW), and 217–237 (IGWIALIILSSGIIGLILIQF).

It belongs to the DedA family.

It is found in the cell membrane. This is an uncharacterized protein from Buchnera aphidicola subsp. Schizaphis graminum (strain Sg).